The chain runs to 60 residues: Large ribosomal subunit protein uL30 (60 aa).

The protein belongs to the universal ribosomal protein uL30 family. Part of the 50S ribosomal subunit.

This is Large ribosomal subunit protein uL30 from Xanthobacter autotrophicus (strain ATCC BAA-1158 / Py2).